Reading from the N-terminus, the 224-residue chain is GTP-binding protein RHO3 (224 aa).

Position 22–29 (22–29 (GDGACGKT)) interacts with GTP. Positions 44–52 (YEPTVFENY) match the Effector region motif. GTP contacts are provided by residues 69–73 (DTAGQ) and 127–130 (LKCD). The interval 205–224 (TPKGARDSAPEAESSSCTIM) is disordered. The residue at position 221 (C221) is a Cysteine methyl ester. C221 carries the S-geranylgeranyl cysteine lipid modification. Residues 222-224 (TIM) constitute a propeptide, removed in mature form.

This sequence belongs to the small GTPase superfamily. Rho family.

It localises to the cell membrane. In terms of biological role, involved in the regulation of actin polarization. Rho proteins are required for distinct steps during polarized hyphal growth of A.gossypii. The sequence is that of GTP-binding protein RHO3 (RHO3) from Eremothecium gossypii (strain ATCC 10895 / CBS 109.51 / FGSC 9923 / NRRL Y-1056) (Yeast).